Consider the following 333-residue polypeptide: MMRDFVSEEKLKLLFEKYYRSTDIDPPALITKREVGFMTFEGEIIRHMHLSNKFELNNMLRTTVPRHVYSSAAYYKKPDEKKMPEKIWEGADLIFDLDSDHLPGAEKMTYEEMLNSIKEQTKRLVNKFLVSDLGISEKDIRIYFSGSRGYHVHVSSEDVYPLGSDARREITDYVSGNSLSISVIDKALKTGEKRPGGWIKDVISKLYELGINAEKISQKQIERAIDQVKSHNATMVDAPVTYDIHRLIRMPQSLHGKSGMMVKEVDLDKFDDFDPLSDAIPKIFLEGDYDINVHEKTRKLRLLDYKIDLPPGRNRVPQYVAIFLVSSGRADFL.

Residues Asp-96, Asp-98, and Asp-237 contribute to the active site.

Belongs to the eukaryotic-type primase small subunit family. Heterodimer of a small subunit (PriS) and a large subunit (PriL). It depends on Mg(2+) as a cofactor. Mn(2+) serves as cofactor.

Its function is as follows. Catalytic subunit of DNA primase, an RNA polymerase that catalyzes the synthesis of short RNA molecules used as primers for DNA polymerase during DNA replication. The small subunit contains the primase catalytic core and has DNA synthesis activity on its own. Binding to the large subunit stabilizes and modulates the activity, increasing the rate of DNA synthesis while decreasing the length of the DNA fragments, and conferring RNA synthesis capability. The DNA polymerase activity may enable DNA primase to also catalyze primer extension after primer synthesis. May also play a role in DNA repair. The polypeptide is DNA primase small subunit PriS (Thermoplasma volcanium (strain ATCC 51530 / DSM 4299 / JCM 9571 / NBRC 15438 / GSS1)).